The primary structure comprises 109 residues: Phosphoribosyl-ATP pyrophosphatase (109 aa).

It belongs to the PRA-PH family.

It is found in the cytoplasm. It catalyses the reaction 1-(5-phospho-beta-D-ribosyl)-ATP + H2O = 1-(5-phospho-beta-D-ribosyl)-5'-AMP + diphosphate + H(+). It functions in the pathway amino-acid biosynthesis; L-histidine biosynthesis; L-histidine from 5-phospho-alpha-D-ribose 1-diphosphate: step 2/9. This chain is Phosphoribosyl-ATP pyrophosphatase, found in Parvibaculum lavamentivorans (strain DS-1 / DSM 13023 / NCIMB 13966).